The primary structure comprises 102 residues: Small ribosomal subunit protein uS10 (102 aa).

This sequence belongs to the universal ribosomal protein uS10 family. Part of the 30S ribosomal subunit.

Its function is as follows. Involved in the binding of tRNA to the ribosomes. The protein is Small ribosomal subunit protein uS10 of Bifidobacterium longum subsp. infantis (strain ATCC 15697 / DSM 20088 / JCM 1222 / NCTC 11817 / S12).